The following is a 215-amino-acid chain: Large ribosomal subunit protein uL3 (215 aa).

Position 156 is an N5-methylglutamine (Gln156).

This sequence belongs to the universal ribosomal protein uL3 family. As to quaternary structure, part of the 50S ribosomal subunit. Forms a cluster with proteins L14 and L19. Methylated by PrmB.

In terms of biological role, one of the primary rRNA binding proteins, it binds directly near the 3'-end of the 23S rRNA, where it nucleates assembly of the 50S subunit. This chain is Large ribosomal subunit protein uL3, found in Xylella fastidiosa (strain 9a5c).